We begin with the raw amino-acid sequence, 151 residues long: Small ribosomal subunit protein uS15 (151 aa).

It belongs to the universal ribosomal protein uS15 family. As to quaternary structure, component of the small ribosomal subunit. Part of the small subunit (SSU) processome, composed of more than 70 proteins and the RNA chaperone small nucleolar RNA (snoRNA) U3.

It localises to the cytoplasm. It is found in the nucleus. The protein localises to the nucleolus. Its function is as follows. Component of the small ribosomal subunit. The ribosome is a large ribonucleoprotein complex responsible for the synthesis of proteins in the cell. Part of the small subunit (SSU) processome, first precursor of the small eukaryotic ribosomal subunit. During the assembly of the SSU processome in the nucleolus, many ribosome biogenesis factors, an RNA chaperone and ribosomal proteins associate with the nascent pre-rRNA and work in concert to generate RNA folding, modifications, rearrangements and cleavage as well as targeted degradation of pre-ribosomal RNA by the RNA exosome. This is Small ribosomal subunit protein uS15 (rps-13) from Caenorhabditis elegans.